A 96-amino-acid polypeptide reads, in one-letter code: Putative membrane protein insertion efficiency factor (96 aa).

The protein belongs to the UPF0161 family.

Its subcellular location is the cell inner membrane. In terms of biological role, could be involved in insertion of integral membrane proteins into the membrane. The chain is Putative membrane protein insertion efficiency factor from Borreliella afzelii (strain PKo) (Borrelia afzelii).